The sequence spans 273 residues: Formamidopyrimidine-DNA glycosylase (273 aa).

Catalysis depends on Pro2, which acts as the Schiff-base intermediate with DNA. Glu3 (proton donor) is an active-site residue. Lys58 (proton donor; for beta-elimination activity) is an active-site residue. DNA-binding residues include His92, Arg111, and Lys153. An FPG-type zinc finger spans residues 238-272; that stretch reads MVYARDGQECLSCSSSIIKTKHSGRSTFYCKSCQK. Catalysis depends on Arg262, which acts as the Proton donor; for delta-elimination activity.

It belongs to the FPG family. Monomer. Requires Zn(2+) as cofactor.

It carries out the reaction Hydrolysis of DNA containing ring-opened 7-methylguanine residues, releasing 2,6-diamino-4-hydroxy-5-(N-methyl)formamidopyrimidine.. It catalyses the reaction 2'-deoxyribonucleotide-(2'-deoxyribose 5'-phosphate)-2'-deoxyribonucleotide-DNA = a 3'-end 2'-deoxyribonucleotide-(2,3-dehydro-2,3-deoxyribose 5'-phosphate)-DNA + a 5'-end 5'-phospho-2'-deoxyribonucleoside-DNA + H(+). Functionally, involved in base excision repair of DNA damaged by oxidation or by mutagenic agents. Acts as a DNA glycosylase that recognizes and removes damaged bases. Has a preference for oxidized purines, such as 7,8-dihydro-8-oxoguanine (8-oxoG). Has AP (apurinic/apyrimidinic) lyase activity and introduces nicks in the DNA strand. Cleaves the DNA backbone by beta-delta elimination to generate a single-strand break at the site of the removed base with both 3'- and 5'-phosphates. This chain is Formamidopyrimidine-DNA glycosylase, found in Rickettsia bellii (strain OSU 85-389).